The following is a 527-amino-acid chain: Putative WEB family protein At4g17210 (527 aa).

Disordered regions lie at residues 1–28 and 46–70; these read MAKIRTDAPVMPPETPPRSSEVGEIDTR and FSKKQPPRLSSSSSSQSQDTTTDVS. Residues 55–68 show a composition bias toward low complexity; that stretch reads SSSSSSQSQDTTTD. Coiled-coil stretches lie at residues 95 to 159, 202 to 389, and 436 to 513; these read AAKA…YILI, SNKI…AKHM, and KKIR…EAHS.

It belongs to the WEB family.

In Arabidopsis thaliana (Mouse-ear cress), this protein is Putative WEB family protein At4g17210.